Consider the following 185-residue polypeptide: TATA-box-binding protein 3 (185 aa).

Tandem repeats lie at residues 7–84 and 100–178.

It belongs to the TBP family.

General factor that plays a role in the activation of archaeal genes transcribed by RNA polymerase. Binds specifically to the TATA box promoter element which lies close to the position of transcription initiation. The chain is TATA-box-binding protein 3 from Methanosarcina mazei (strain ATCC BAA-159 / DSM 3647 / Goe1 / Go1 / JCM 11833 / OCM 88) (Methanosarcina frisia).